Here is a 131-residue protein sequence, read N- to C-terminus: Small ribosomal subunit protein uS8 (131 aa).

Belongs to the universal ribosomal protein uS8 family. Part of the 30S ribosomal subunit. Contacts proteins S5 and S12.

One of the primary rRNA binding proteins, it binds directly to 16S rRNA central domain where it helps coordinate assembly of the platform of the 30S subunit. This chain is Small ribosomal subunit protein uS8, found in Thermodesulfovibrio yellowstonii (strain ATCC 51303 / DSM 11347 / YP87).